A 410-amino-acid polypeptide reads, in one-letter code: Lipoyl synthase, mitochondrial (410 aa).

Residues C125, C130, C136, C157, C161, C164, and S373 each coordinate [4Fe-4S] cluster. The Radical SAM core domain occupies 140 to 362; the sequence is SDEEGTATAT…EKEAMDMGFL (223 aa).

This sequence belongs to the radical SAM superfamily. Lipoyl synthase family. [4Fe-4S] cluster serves as cofactor.

Its subcellular location is the mitochondrion. The enzyme catalyses [[Fe-S] cluster scaffold protein carrying a second [4Fe-4S](2+) cluster] + N(6)-octanoyl-L-lysyl-[protein] + 2 oxidized [2Fe-2S]-[ferredoxin] + 2 S-adenosyl-L-methionine + 4 H(+) = [[Fe-S] cluster scaffold protein] + N(6)-[(R)-dihydrolipoyl]-L-lysyl-[protein] + 4 Fe(3+) + 2 hydrogen sulfide + 2 5'-deoxyadenosine + 2 L-methionine + 2 reduced [2Fe-2S]-[ferredoxin]. It participates in protein modification; protein lipoylation via endogenous pathway; protein N(6)-(lipoyl)lysine from octanoyl-[acyl-carrier-protein]: step 2/2. Catalyzes the radical-mediated insertion of two sulfur atoms into the C-6 and C-8 positions of the octanoyl moiety bound to the lipoyl domains of lipoate-dependent enzymes, thereby converting the octanoylated domains into lipoylated derivatives. This is Lipoyl synthase, mitochondrial from Leishmania major.